Here is a 238-residue protein sequence, read N- to C-terminus: LexA repressor (238 aa).

A DNA-binding region (H-T-H motif) is located at residues 26–46 (FDEMKDALELRSKSGIHRLIS). Residues Ser159 and Lys197 each act as for autocatalytic cleavage activity in the active site.

It belongs to the peptidase S24 family. In terms of assembly, homodimer.

It catalyses the reaction Hydrolysis of Ala-|-Gly bond in repressor LexA.. In terms of biological role, represses a number of genes involved in the response to DNA damage (SOS response), including recA and lexA. In the presence of single-stranded DNA, RecA interacts with LexA causing an autocatalytic cleavage which disrupts the DNA-binding part of LexA, leading to derepression of the SOS regulon and eventually DNA repair. In Gluconobacter oxydans (strain 621H) (Gluconobacter suboxydans), this protein is LexA repressor.